Reading from the N-terminus, the 250-residue chain is Accessory gland-specific peptide 26Aa (250 aa).

The signal sequence occupies residues 1–18 (MNQILLCSQILLLFFTVA). The tract at residues 79 to 100 (DYPINNSKSRKNSSTLPSPILT) is disordered. Over residues 82 to 95 (INNSKSRKNSSTLP) the composition is skewed to polar residues. Residues asparagine 83, asparagine 90, and asparagine 131 are each glycosylated (N-linked (GlcNAc...) asparagine). Disordered regions lie at residues 172 to 191 (NVQNARKSTKSCKKRPSKDI) and 230 to 250 (NNPATDVPTGKSPSEGNPSTT). The span at 178-187 (KSTKSCKKRP) shows a compositional bias: basic residues. Over residues 240-250 (KSPSEGNPSTT) the composition is skewed to polar residues.

Proteolytically cleaved as it is secreted and in the recipient female. Main cells of the accessory glands of males.

It localises to the secreted. The protein resides in the extracellular space. Functionally, this protein is transferred from male to female's hemolymph during mating, affecting egglaying and behavior after mating. This chain is Accessory gland-specific peptide 26Aa (Acp26Aa), found in Drosophila mauritiana (Fruit fly).